Consider the following 608-residue polypeptide: Glutamyl-tRNA(Gln) amidotransferase subunit E (608 aa).

The segment at 402-422 is disordered; sequence EETRGANPDGTTRFLRPRPGA.

This sequence belongs to the GatB/GatE family. GatE subfamily. Heterodimer of GatD and GatE.

It carries out the reaction L-glutamyl-tRNA(Gln) + L-glutamine + ATP + H2O = L-glutaminyl-tRNA(Gln) + L-glutamate + ADP + phosphate + H(+). Functionally, allows the formation of correctly charged Gln-tRNA(Gln) through the transamidation of misacylated Glu-tRNA(Gln) in organisms which lack glutaminyl-tRNA synthetase. The reaction takes place in the presence of glutamine and ATP through an activated gamma-phospho-Glu-tRNA(Gln). The GatDE system is specific for glutamate and does not act on aspartate. The sequence is that of Glutamyl-tRNA(Gln) amidotransferase subunit E from Pyrobaculum calidifontis (strain DSM 21063 / JCM 11548 / VA1).